The sequence spans 84 residues: MKVVLIVCLVWVMAMMELVSCECWSQADCSDGHCCAGSSFSKNCRPYGGDGEQCEPRNKYEVYSTGCPCEENLMCSVINRCQSA.

A signal peptide spans 1-21; that stretch reads MKVVLIVCLVWVMAMMELVSC. Disulfide bonds link Cys23–Cys35, Cys29–Cys44, Cys34–Cys67, Cys54–Cys75, and Cys69–Cys81.

The protein belongs to the AVIT (prokineticin) family. As to expression, expressed by the venom gland.

It localises to the secreted. This Cyriopagopus hainanus (Chinese bird spider) protein is U8-theraphotoxin-Hhn1c 1.